The primary structure comprises 229 residues: Putative germin-like protein subfamily 1 member 2 (229 aa).

Positions 1–24 are cleaved as a signal peptide; the sequence is MKGLVQFLVAKIILLVLASTFVHC. Cys34 and Cys50 form a disulfide bridge. N-linked (GlcNAc...) asparagine glycosylation is found at Asn38 and Asn71. The Cupin type-1 domain maps to 64–215; it reads SGLNIPGNTS…AFALDVNIVR (152 aa). Mn(2+)-binding residues include His112 and His114. Residue Asn139 is glycosylated (N-linked (GlcNAc...) asparagine). His163 serves as a coordination point for Mn(2+).

Belongs to the germin family. As to quaternary structure, oligomer (believed to be a pentamer but probably hexamer).

The protein resides in the secreted. The protein localises to the extracellular space. It is found in the apoplast. Functionally, may play a role in plant defense. Probably has no oxalate oxidase activity even if the active site is conserved. This Arabidopsis thaliana (Mouse-ear cress) protein is Putative germin-like protein subfamily 1 member 2.